Here is a 227-residue protein sequence, read N- to C-terminus: Cytidylate kinase (227 aa).

Residue 11-19 coordinates ATP; it reads GPSGAGKGT.

This sequence belongs to the cytidylate kinase family. Type 1 subfamily.

The protein resides in the cytoplasm. It carries out the reaction CMP + ATP = CDP + ADP. It catalyses the reaction dCMP + ATP = dCDP + ADP. This is Cytidylate kinase from Pasteurella multocida (strain Pm70).